A 257-amino-acid polypeptide reads, in one-letter code: MVSLFWQTTGTGDRDLVLLHGWGLNAEVWSYIVPRLATHFRLHLVDLPGYGRSRGYGALTLEEMAEEVASRAPHGALWLGWSLGGLVATTVARRCPHAVAGLVTVASSPRFCADGDWPGIRPEVLEGFARELRQDFTRTVSRFLGLQTLGTASARQDTRWLKSVVLAHPAPAIEVLTGGLALLRTSDVRKALDQLDVPLLRLYGYLDGLVPRKVVPLVDELSTASHSIVFAGAAHAPFISHPVPFCQALCDFSQLES.

The region spanning 16–242 (LVLLHGWGLN…AAHAPFISHP (227 aa)) is the AB hydrolase-1 domain. Residues Trp-22, 82-83 (SL), and 143-147 (FLGLQ) contribute to the substrate site. The active-site Nucleophile is Ser-82. Active-site residues include Asp-207 and His-235. Substrate is bound at residue His-235.

The protein belongs to the AB hydrolase superfamily. Carboxylesterase BioH family. Monomer.

It localises to the cytoplasm. The enzyme catalyses 6-carboxyhexanoyl-[ACP] methyl ester + H2O = 6-carboxyhexanoyl-[ACP] + methanol + H(+). The protein operates within cofactor biosynthesis; biotin biosynthesis. The physiological role of BioH is to remove the methyl group introduced by BioC when the pimeloyl moiety is complete. It allows to synthesize pimeloyl-ACP via the fatty acid synthetic pathway through the hydrolysis of the ester bonds of pimeloyl-ACP esters. The polypeptide is Pimeloyl-[acyl-carrier protein] methyl ester esterase (Sodalis glossinidius (strain morsitans)).